The chain runs to 295 residues: Bifunctional protein FolD (295 aa).

Residues 166-168, Ser191, and Ile232 each bind NADP(+); that span reads GRS.

Belongs to the tetrahydrofolate dehydrogenase/cyclohydrolase family. In terms of assembly, homodimer.

The catalysed reaction is (6R)-5,10-methylene-5,6,7,8-tetrahydrofolate + NADP(+) = (6R)-5,10-methenyltetrahydrofolate + NADPH. It carries out the reaction (6R)-5,10-methenyltetrahydrofolate + H2O = (6R)-10-formyltetrahydrofolate + H(+). Its pathway is one-carbon metabolism; tetrahydrofolate interconversion. Its function is as follows. Catalyzes the oxidation of 5,10-methylenetetrahydrofolate to 5,10-methenyltetrahydrofolate and then the hydrolysis of 5,10-methenyltetrahydrofolate to 10-formyltetrahydrofolate. This is Bifunctional protein FolD from Rhodopseudomonas palustris (strain HaA2).